The primary structure comprises 375 residues: Trichodiene synthase (375 aa).

It belongs to the trichodiene synthase family.

It catalyses the reaction (2E,6E)-farnesyl diphosphate = trichodiene + diphosphate. Its pathway is sesquiterpene biosynthesis; trichothecene biosynthesis. Functionally, TS is a member of the terpene cyclase group of enzymes. It catalyzes the isomerization and cyclization of farnesyl pyro-phosphate to form trichodiene, the first cyclic intermediate in the biosynthetic pathway for trichothecenes. It serves to branch trichothecene biosynthesis from the isoprenoid pathway. This is Trichodiene synthase (TRI5) from Fusarium acaciae-mearnsii.